Consider the following 258-residue polypeptide: Probable parvulin-type peptidyl-prolyl cis-trans isomerase (258 aa).

Residues 1–19 (MKRIAMLAAACVIAVPAFA) form the signal peptide. The PpiC domain maps to 127–219 (KMEYKVRHIL…FGWHVIQVDD (93 aa)). Basic and acidic residues predominate over residues 158 to 175 (DDLAKKNSKDPGSAERGG). A disordered region spans residues 158-178 (DDLAKKNSKDPGSAERGGDLG).

The protein belongs to the PpiC/parvulin rotamase family.

The enzyme catalyses [protein]-peptidylproline (omega=180) = [protein]-peptidylproline (omega=0). This Bordetella bronchiseptica (strain ATCC BAA-588 / NCTC 13252 / RB50) (Alcaligenes bronchisepticus) protein is Probable parvulin-type peptidyl-prolyl cis-trans isomerase.